The primary structure comprises 318 residues: Acetyl-coenzyme A carboxylase carboxyl transferase subunit alpha (318 aa).

A CoA carboxyltransferase C-terminal domain is found at 32 to 293 (NLSDELERLR…KERLVSQLDR (262 aa)).

This sequence belongs to the AccA family. Acetyl-CoA carboxylase is a heterohexamer composed of biotin carboxyl carrier protein (AccB), biotin carboxylase (AccC) and two subunits each of ACCase subunit alpha (AccA) and ACCase subunit beta (AccD).

The protein resides in the cytoplasm. The enzyme catalyses N(6)-carboxybiotinyl-L-lysyl-[protein] + acetyl-CoA = N(6)-biotinyl-L-lysyl-[protein] + malonyl-CoA. It functions in the pathway lipid metabolism; malonyl-CoA biosynthesis; malonyl-CoA from acetyl-CoA: step 1/1. Functionally, component of the acetyl coenzyme A carboxylase (ACC) complex. First, biotin carboxylase catalyzes the carboxylation of biotin on its carrier protein (BCCP) and then the CO(2) group is transferred by the carboxyltransferase to acetyl-CoA to form malonyl-CoA. The protein is Acetyl-coenzyme A carboxylase carboxyl transferase subunit alpha of Saccharophagus degradans (strain 2-40 / ATCC 43961 / DSM 17024).